Consider the following 471-residue polypeptide: Serine/threonine-protein kinase AtPK2/AtPK19 (471 aa).

A disordered region spans residues 1 to 21; the sequence is MVSSQCSVANKNQTGKPFQKH. One can recognise a Protein kinase domain in the interval 140–395; that stretch reads FEVLKVVGQG…AEEIKKHKWF (256 aa). ATP contacts are provided by residues 146-154 and Lys-169; that span reads VGQGAFGKV. The active-site Proton acceptor is Asp-263. The tract at residues 281 to 307 is activation loop; the sequence is DFGLAKEFEENTRSNSMCGTTEYMAPE. At Ser-296 the chain carries Phosphoserine; by PDPK1. The 71-residue stretch at 396 to 466 folds into the AGC-kinase C-terminal domain; the sequence is KAINWKKLEA…VRPPHSFLHR (71 aa). At Thr-455 the chain carries Phosphothreonine; by TOR.

The protein belongs to the protein kinase superfamily. AGC Ser/Thr protein kinase family. S6 kinase subfamily. As to quaternary structure, interacts with TAP46. Binds to MRF1. Undergoes serine-specific autophosphorylation. Phosphorylated at Thr-455 by TOR.

The catalysed reaction is L-seryl-[protein] + ATP = O-phospho-L-seryl-[protein] + ADP + H(+). The enzyme catalyses L-threonyl-[protein] + ATP = O-phospho-L-threonyl-[protein] + ADP + H(+). Its activity is regulated as follows. Activated by PDK1. Its function is as follows. Downstream effector of TOR signaling pathway. May be involved in adaptation of plant to cold or high-salt conditions. Mediates the phosphorylation of MRFs (e.g. MRF1). This Arabidopsis thaliana (Mouse-ear cress) protein is Serine/threonine-protein kinase AtPK2/AtPK19 (ATPK2).